A 395-amino-acid chain; its full sequence is F-box protein At5g46170 (395 aa).

In terms of domain architecture, F-box spans 24–72 (IDHFDHLPDSILLLVFNKIGDVKALGRCCVVSRRFHSLVPQVDNVVVRV). The interval 122-158 (TKRSSSSCGGSGSSSSSLSISGDDDGGEIEQGGVTHH) is disordered. Residues 125–142 (SSSSCGGSGSSSSSLSIS) are compositionally biased toward low complexity.

In Arabidopsis thaliana (Mouse-ear cress), this protein is F-box protein At5g46170.